Reading from the N-terminus, the 476-residue chain is Sulfate adenylyltransferase subunit 1 (476 aa).

A tr-type G domain is found at 17-232 (KDLLRLLTAG…LETVHIDSDN (216 aa)). Residues 26-33 (GSVDDGKS) are G1. 26–33 (GSVDDGKS) is a binding site for GTP. A G2 region spans residues 84–88 (GITID). The interval 105-108 (DTPG) is G3. Residues 105 to 109 (DTPGH) and 160 to 163 (NKMD) each bind GTP. The interval 160 to 163 (NKMD) is G4. Residues 197-199 (SAL) form a G5 region.

It belongs to the TRAFAC class translation factor GTPase superfamily. Classic translation factor GTPase family. CysN/NodQ subfamily. In terms of assembly, heterodimer composed of CysD, the smaller subunit, and CysN.

It carries out the reaction sulfate + ATP + H(+) = adenosine 5'-phosphosulfate + diphosphate. Its pathway is sulfur metabolism; hydrogen sulfide biosynthesis; sulfite from sulfate: step 1/3. Its function is as follows. With CysD forms the ATP sulfurylase (ATPS) that catalyzes the adenylation of sulfate producing adenosine 5'-phosphosulfate (APS) and diphosphate, the first enzymatic step in sulfur assimilation pathway. APS synthesis involves the formation of a high-energy phosphoric-sulfuric acid anhydride bond driven by GTP hydrolysis by CysN coupled to ATP hydrolysis by CysD. This is Sulfate adenylyltransferase subunit 1 from Bacteroides fragilis (strain YCH46).